A 459-amino-acid chain; its full sequence is MNRSPSTSGLLPLPGTPSSSWALYRARLSNMFRNTDVSVVIAFWLFGLINNILYVLVLSAAQDLVGTSVPKGAVLLADVLPSFLTKLVAPYFIHRVPYSVRIAVFVALSCAGMLVVAAAPVEGAVGVKLLGVVLASLSSGGGELSFLGLTHYYGHGSLAAWGSGTGGAGLVGAGLYVVLTGWIGLGVRGSLLVGALLPSVMVVAFWGILPRGPLKGWKGGYERVAEPGEEEDGEEGFEDVPAGAASAGLLAPGPSVAATAYTHHHEGRTGRASFWGNVRRARALFFPYMLPLLLVYVAEYTINQGVAPTLLFPLDQSPFSEFREYYPFYGFLYQLGVFISRSSTPFIRIHHLYLPSFLQVANLVLLTLHAVLNFIPSVYLVFVVIFWEGLLGGAVYVNTFAEIMENVPAEDREFSLGATSVSDSGGICIAGFLGMAMEVWLCRWQVSQGRDYCRRIEAS.

A run of 11 helical transmembrane segments spans residues 37–57 (VSVV…YVLV), 73–93 (AVLL…PYFI), 102–122 (IAVF…APVE), 129–149 (LLGV…FLGL), 167–187 (GAGL…GLGV), 189–209 (GSLL…WGIL), 240–260 (VPAG…AATA), 283–303 (ALFF…YTIN), 325–342 (YYPF…ISRS), 352–372 (LYLP…HAVL), and 374–394 (FIPS…LGGA).

This sequence belongs to the battenin family.

It is found in the vacuole membrane. Its function is as follows. Involved in vacuolar transport and vacuole pH homeostasis. Also required for cytokinesis. The sequence is that of Protein BTN1 (BTN1) from Chaetomium globosum (strain ATCC 6205 / CBS 148.51 / DSM 1962 / NBRC 6347 / NRRL 1970) (Soil fungus).